A 418-amino-acid chain; its full sequence is Hydroxysteroid dehydrogenase-like protein 2 (418 aa).

Residues 17 to 23, lysine 42, and aspartate 74 each bind NADP(+); that span reads GASRGIG. Lysine 42 is subject to N6-(2-hydroxyisobutyryl)lysine. The residue at position 116 (lysine 116) is an N6-acetyllysine. Residue tyrosine 168 is the Proton acceptor of the active site. NADP(+) is bound at residue lysine 172. The SCP2 domain maps to 306–415; the sequence is RSGAVEETFR…KLEKLMNQMN (110 aa). N6-succinyllysine is present on lysine 318.

It belongs to the short-chain dehydrogenases/reductases (SDR) family.

The protein localises to the peroxisome. It localises to the mitochondrion. In terms of biological role, has apparently no steroid dehydrogenase activity. Controls bile acid (BA) and lipid metabolism in response to nutritional cues. The protein is Hydroxysteroid dehydrogenase-like protein 2 (HSDL2) of Bos taurus (Bovine).